Consider the following 438-residue polypeptide: Death-associated inhibitor of apoptosis 1 (438 aa).

A BIR 1 repeat occupies 44 to 110; that stretch reads EETRLKTFTD…QRWSPNCPLL (67 aa). Residues 194-213 form a disordered region; sequence TATQATGDVQPETCRPSAAS. The BIR 2 repeat unit spans residues 226–293; sequence ETARLRTFEA…ALWLSQCRFV (68 aa). Cys-263, Cys-266, His-283, and Cys-290 together coordinate Zn(2+). The tract at residues 322–346 is disordered; it reads GGVAVASTQASEEEQQTSLSSEEAV. Over residues 327–345 the composition is skewed to low complexity; that stretch reads ASTQASEEEQQTSLSSEEA. The RING-type zinc finger occupies 391-426; that stretch reads CKICYGAEYNTAFLPCGHVVACAKCASSVTKCPLCR.

It belongs to the IAP family. In terms of assembly, interacts (via BIR 2 domain) with Dronc (via residues 114-125). Rpr, hid and grim can outcompete Dronc for binding Diap1 therefore removing Diap1-mediated ubiquitination. Interacts (via BIR 2 domain) with HtrA2; this displaces any bound Dronc. Interacts with Strica. The N-terminally cleaved form interacts with Ubr3 (via UBR-type zinc finger); the interaction promotes the recruitment and uniquitination of substrate capases such as Dronc. Ubiquitinated and degraded by HtrA2 in apoptotic cells; proteolytic cleavage at specific sites in the BIR domain linker region generating inactive fragments. Mutation of one site reduces but does not abolish cleavage as another site is selected by the protease.

The enzyme catalyses S-ubiquitinyl-[E2 ubiquitin-conjugating enzyme]-L-cysteine + [acceptor protein]-L-lysine = [E2 ubiquitin-conjugating enzyme]-L-cysteine + N(6)-ubiquitinyl-[acceptor protein]-L-lysine.. Functionally, anti-apoptotic protein which functions as a caspase regulator, using its E3 ubiquitin-protein ligase activity to smother caspase activity. Binds, ubiquitinates and inactivates initiator caspase Dronc, and effector caspases Drice and Dcp-1. Acts as a Nedd8-E3 ubiquitin-protein ligase for Drice. Suppresses apoptosis by targeting the apoptosome for ubiquitination and inactivation. Plays an important role in cell motility. Overexpression suppresses rpr and hid-dependent cell death in the eye. Interaction of Diap1 with Dronc is required to suppress Dronc-mediated cell death through Diap1-mediated ubiquitination of Dronc. Acts as a positive regulator of Wnt signaling. This is Death-associated inhibitor of apoptosis 1 (Diap1) from Drosophila melanogaster (Fruit fly).